The sequence spans 504 residues: E3 ubiquitin-protein ligase dbl4 (504 aa).

Residues His127–Glu338 are TRIAD supradomain. Cys131, Cys134, Cys147, His149, Cys152, Cys155, Cys173, Cys178, Cys217, Cys222, Cys244, Cys246, Cys251, Cys254, His259, Cys264, Cys291, and Cys294 together coordinate Zn(2+). The RING-type 1 zinc finger occupies Cys131–Cys178. The segment at Asp197 to Cys264 adopts an IBR-type zinc-finger fold. The RING-type 2; atypical zinc-finger motif lies at Cys291 to Cys320. Residue Cys304 is part of the active site. Residues Cys309, Cys312, Cys317, Cys320, His327, and Cys334 each coordinate Zn(2+).

Belongs to the RBR family.

The protein resides in the cytoplasm. It localises to the nucleus. The catalysed reaction is [E2 ubiquitin-conjugating enzyme]-S-ubiquitinyl-L-cysteine + [acceptor protein]-L-lysine = [E2 ubiquitin-conjugating enzyme]-L-cysteine + [acceptor protein]-N(6)-ubiquitinyl-L-lysine.. The protein operates within protein modification; protein ubiquitination. Its function is as follows. Probable ubiquitin-protein ligase involved in the degradation-related ubiquitination of histones. Contributes to the post-translational regulation of histone protein levels by polyubiquitination of excess histones for subsequent degradation. The chain is E3 ubiquitin-protein ligase dbl4 from Schizosaccharomyces pombe (strain 972 / ATCC 24843) (Fission yeast).